The sequence spans 490 residues: Probable cytosol aminopeptidase (490 aa).

Mn(2+)-binding residues include Lys-255 and Asp-260. The active site involves Lys-267. 3 residues coordinate Mn(2+): Asp-278, Asp-337, and Glu-339. Arg-341 is an active-site residue.

Belongs to the peptidase M17 family. It depends on Mn(2+) as a cofactor.

It localises to the cytoplasm. It catalyses the reaction Release of an N-terminal amino acid, Xaa-|-Yaa-, in which Xaa is preferably Leu, but may be other amino acids including Pro although not Arg or Lys, and Yaa may be Pro. Amino acid amides and methyl esters are also readily hydrolyzed, but rates on arylamides are exceedingly low.. The catalysed reaction is Release of an N-terminal amino acid, preferentially leucine, but not glutamic or aspartic acids.. Functionally, presumably involved in the processing and regular turnover of intracellular proteins. Catalyzes the removal of unsubstituted N-terminal amino acids from various peptides. The sequence is that of Probable cytosol aminopeptidase from Gluconobacter oxydans (strain 621H) (Gluconobacter suboxydans).